We begin with the raw amino-acid sequence, 149 residues long: MGAFSEKQESLVKSSWEAFKQNVPHHSAVFYTLILEKAPAAQNMFSFLSNGVDPNNPKLKAHAEKVFKMTVDSAVQLRAKGEVVLADPTLGSVHVQKGVLDPHFLVVKEALLKTFKEAVGDKWNDELGNAWEVAYDELAAAIKKAMGSA.

The Globin domain maps to 3–147; the sequence is AFSEKQESLV…LAAAIKKAMG (145 aa). At tyrosine 31 the chain carries Nitrated tyrosine. Serine 46 is a heme b binding site. At serine 46 the chain carries Phosphoserine. Histidine 62 lines the O2 pocket. Residues lysine 65, histidine 94, and lysine 97 each contribute to the heme b site. The residue at position 135 (tyrosine 135) is a Nitrated tyrosine.

This sequence belongs to the plant globin family. In terms of assembly, monomer. In terms of processing, nitrated in effective nodules and particularly in hypoxic conditions; this mechanism may play a protective role in the symbiosis by buffering toxic peroxynitrite NO(2)(-). Nitration level decrease during nodule senescence. Phosphorylation at Ser-46 disrupts the molecular environment of its porphyrin ring oxygen binding pocket, thus leading to a reduced oxygen consumption and to the delivery of oxygen O(2) to symbiosomes. As to expression, root nodules.

The protein resides in the cytoplasm. It is found in the cytosol. It localises to the nucleus. Its function is as follows. Leghemoglobin that reversibly binds oxygen O(2) through a pentacoordinated heme iron. In root nodules, facilitates the diffusion of oxygen to the bacteroids while preventing the bacterial nitrogenase from being inactivated by buffering dioxygen, nitric oxide and carbon monoxide, and promoting the formation of reactive oxygen species (ROS, e.g. H(2)O(2)). This role is essential for symbiotic nitrogen fixation (SNF). This Canavalia lineata (Beach bean) protein is Leghemoglobin.